Reading from the N-terminus, the 182-residue chain is Adenine phosphoribosyltransferase (182 aa).

It belongs to the purine/pyrimidine phosphoribosyltransferase family. Homodimer.

It localises to the cytoplasm. It catalyses the reaction AMP + diphosphate = 5-phospho-alpha-D-ribose 1-diphosphate + adenine. Its pathway is purine metabolism; AMP biosynthesis via salvage pathway; AMP from adenine: step 1/1. Catalyzes a salvage reaction resulting in the formation of AMP, that is energically less costly than de novo synthesis. The sequence is that of Adenine phosphoribosyltransferase from Stutzerimonas stutzeri (strain A1501) (Pseudomonas stutzeri).